Reading from the N-terminus, the 600-residue chain is Adenine deaminase (600 aa).

This sequence belongs to the metallo-dependent hydrolases superfamily. Adenine deaminase family. Mn(2+) serves as cofactor.

It catalyses the reaction adenine + H2O + H(+) = hypoxanthine + NH4(+). This is Adenine deaminase from Roseobacter denitrificans (strain ATCC 33942 / OCh 114) (Erythrobacter sp. (strain OCh 114)).